Consider the following 575-residue polypeptide: Alpha-(1,6)-fucosyltransferase (575 aa).

At 1–9 (MRAWTGSWR) the chain is on the cytoplasmic side. Residues 10-30 (WIMLILFAWGTLLFYIGGHLV) form a helical; Signal-anchor for type II membrane protein membrane-spanning segment. Residues 31 to 575 (RDNDHPDHSS…KYPTYPEAEK (545 aa)) are Lumenal-facing. Disulfide bonds link Cys204/Cys266, Cys212/Cys230, and Cys218/Cys222. The region spanning 206 to 493 (KARKLVCNIN…PDASANFHSL (288 aa)) is the GT23 domain. Phosphoserine is present on Ser278. Positions 299 to 305 (PRPPYLP) match the SH3-binding motif. Residues 365-366 (RR) are important for donor substrate binding. The cysteines at positions 465 and 472 are disulfide-linked. Positions 502-563 (QNAHNQIAVY…PSYKVREKIE (62 aa)) constitute an SH3 domain.

It belongs to the glycosyltransferase 23 family. In terms of processing, tyrosine phosphorylated by PKDCC/VLK.

The protein resides in the golgi apparatus. Its subcellular location is the golgi stack membrane. It carries out the reaction N(4)-{beta-D-GlcNAc-(1-&gt;2)-alpha-D-Man-(1-&gt;3)-[beta-D-GlcNAc-(1-&gt;2)-alpha-D-Man-(1-&gt;6)]-beta-D-Man-(1-&gt;4)-beta-D-GlcNAc-(1-&gt;4)-beta-D-GlcNAc}-L-asparaginyl-[protein] + GDP-beta-L-fucose = an N(4)-{beta-D-GlcNAc-(1-&gt;2)-alpha-D-Man-(1-&gt;3)-[beta-D-GlcNAc-(1-&gt;2)-alpha-D-Man-(1-&gt;6)]-beta-D-Man-(1-&gt;4)-beta-D-GlcNAc-(1-&gt;4)-[alpha-L-Fuc-(1-&gt;6)]-beta-D-GlcNAc}-L-asparaginyl-[protein] + GDP + H(+). Its pathway is protein modification; protein glycosylation. In terms of biological role, catalyzes the addition of fucose in alpha 1-6 linkage to the first GlcNAc residue, next to the peptide chains in N-glycans. In Rattus norvegicus (Rat), this protein is Alpha-(1,6)-fucosyltransferase (Fut8).